Reading from the N-terminus, the 458-residue chain is Argininosuccinate lyase (458 aa).

The protein belongs to the lyase 1 family. Argininosuccinate lyase subfamily.

The protein resides in the cytoplasm. The catalysed reaction is 2-(N(omega)-L-arginino)succinate = fumarate + L-arginine. Its pathway is amino-acid biosynthesis; L-arginine biosynthesis; L-arginine from L-ornithine and carbamoyl phosphate: step 3/3. The sequence is that of Argininosuccinate lyase from Hydrogenobaculum sp. (strain Y04AAS1).